A 459-amino-acid chain; its full sequence is MHAAPIPQDAAPIIAADRAHVWHHLSQHKPYETSDPRVFVEGRGMRLWDATGREFLDATSGGVWTVNLGYGRKDVVEAVAAQLLALPYYAGAAGTVPGARYAEALIAKMPGLSRVYYSNSGSEANEKVYKMVRQISHRHHGGRKGKILFRERDYHGTTIAALATSGQAQRAEHYGPFPDGFVSVPHCLEYRAQWDCANYGERAADAIEEVILREGPDSIGCLVLEPITAGGGVIVPPAGYWEKVSHICRKYNILLHLDEVVCGLGRTGAWFGYQHYGIQPDFVTMAKGVAAGYAAISCTVTTEAVFELFKDAPSDPLCHFRDISTFGGCTAGPAAALETLRIIEEEGLLQNTAQMGERLLANLRDLAERHAVIGDVRGKGLFCGAELVADRRTKEPLAEAKVQAVVADCAAQGVLIGATNRSIPGLNTTLCLAPALIASEAEIDRITETIDAALRRLAA.

An N6-(pyridoxal phosphate)lysine modification is found at Lys-287.

The protein belongs to the class-III pyridoxal-phosphate-dependent aminotransferase family. Pyridoxal 5'-phosphate is required as a cofactor.

The protein localises to the cytoplasm. It carries out the reaction taurine + pyruvate = sulfoacetaldehyde + L-alanine. The protein operates within organosulfur degradation; taurine degradation via aerobic pathway; acetyl phosphate and sulfite from taurine: step 1/2. In terms of biological role, catalyzes the degradation of taurine into alanine and sulfoacetaldehyde. This chain is Taurine--pyruvate aminotransferase, found in Rhodobacter capsulatus (strain ATCC BAA-309 / NBRC 16581 / SB1003).